Here is a 332-residue protein sequence, read N- to C-terminus: Small ribosomal subunit protein uS2 (332 aa).

It belongs to the universal ribosomal protein uS2 family.

In Afipia carboxidovorans (strain ATCC 49405 / DSM 1227 / KCTC 32145 / OM5) (Oligotropha carboxidovorans), this protein is Small ribosomal subunit protein uS2.